Here is a 647-residue protein sequence, read N- to C-terminus: Acetyl-coenzyme A synthetase (647 aa).

CoA contacts are provided by residues 192-195 (RGGR), threonine 310, and asparagine 334. Residues 386–388 (GEP), 410–415 (DTWWQT), aspartate 499, and arginine 514 contribute to the ATP site. Serine 522 is a binding site for CoA. Arginine 525 contributes to the ATP binding site. Mg(2+)-binding residues include valine 536, histidine 538, and valine 541. Residue arginine 583 coordinates CoA. An N6-acetyllysine modification is found at lysine 608.

This sequence belongs to the ATP-dependent AMP-binding enzyme family. Mg(2+) is required as a cofactor. Acetylated. Deacetylation by the SIR2-homolog deacetylase activates the enzyme.

The catalysed reaction is acetate + ATP + CoA = acetyl-CoA + AMP + diphosphate. Catalyzes the conversion of acetate into acetyl-CoA (AcCoA), an essential intermediate at the junction of anabolic and catabolic pathways. AcsA undergoes a two-step reaction. In the first half reaction, AcsA combines acetate with ATP to form acetyl-adenylate (AcAMP) intermediate. In the second half reaction, it can then transfer the acetyl group from AcAMP to the sulfhydryl group of CoA, forming the product AcCoA. The polypeptide is Acetyl-coenzyme A synthetase (Caulobacter vibrioides (strain ATCC 19089 / CIP 103742 / CB 15) (Caulobacter crescentus)).